The primary structure comprises 878 residues: Bifunctional heparan sulfate N-deacetylase/N-sulfotransferase 1 (878 aa).

The Cytoplasmic segment spans residues M1–Q17. The sufficient for localization to Golgi membrane stretch occupies residues M1–F169. Residues L18–L38 traverse the membrane as a helical; Signal-anchor for type II membrane protein segment. Topologically, residues Y39–R878 are lumenal. Positions G40–E594 are heparan sulfate N-deacetylase 1. N231, N347, and N397 each carry an N-linked (GlcNAc...) asparagine glycan. Residues K595–R878 form a heparan sulfate N-sulfotransferase 1 region. K610 acts as the For sulfotransferase activity in catalysis. Adenosine 3',5'-bisphosphate is bound at residue K610–T614. N-linked (GlcNAc...) asparagine glycosylation occurs at N663. Adenosine 3',5'-bisphosphate-binding residues include S708 and W813. Residues C814 and C824 are joined by a disulfide bond. K829–Y833 lines the adenosine 3',5'-bisphosphate pocket.

This sequence belongs to the sulfotransferase 1 family. NDST subfamily. As to quaternary structure, monomer.

Its subcellular location is the golgi apparatus membrane. It is found in the golgi apparatus. The protein localises to the trans-Golgi network membrane. The catalysed reaction is alpha-D-glucosaminyl-[heparan sulfate](n) + 3'-phosphoadenylyl sulfate = N-sulfo-alpha-D-glucosaminyl-[heparan sulfate](n) + adenosine 3',5'-bisphosphate + 2 H(+). Its pathway is glycan metabolism; heparan sulfate biosynthesis. It functions in the pathway glycan metabolism; heparin biosynthesis. Functionally, essential bifunctional enzyme that catalyzes both the N-deacetylation and the N-sulfation of glucosamine (GlcNAc) of the glycosaminoglycan in heparan sulfate. Modifies the GlcNAc-GlcA disaccharide repeating sugar backbone to make N-sulfated heparosan, a prerequisite substrate for later modifications in heparin biosynthesis. Plays a role in determining the extent and pattern of sulfation of heparan sulfate. The polypeptide is Bifunctional heparan sulfate N-deacetylase/N-sulfotransferase 1 (ndst1) (Xenopus laevis (African clawed frog)).